The primary structure comprises 96 residues: DNA-directed RNA polymerase subunit Rpo11 (96 aa).

Belongs to the archaeal Rpo11/eukaryotic RPB11/RPC19 RNA polymerase subunit family. Part of the RNA polymerase complex.

The protein resides in the cytoplasm. It catalyses the reaction RNA(n) + a ribonucleoside 5'-triphosphate = RNA(n+1) + diphosphate. DNA-dependent RNA polymerase (RNAP) catalyzes the transcription of DNA into RNA using the four ribonucleoside triphosphates as substrates. The protein is DNA-directed RNA polymerase subunit Rpo11 of Methanococcus maripaludis (strain C5 / ATCC BAA-1333).